The primary structure comprises 184 residues: MMSQPPKVLLLYAHPESQDSIANRVLLQPARHAQHVTVHDLYAHYPDFFIDIHHEQQLLREHQIIVFQHPLYTYSCPALLKEWLDRVLSRGFASGPGGNELEGKYWRSVITTGEPEAAYHQQGLNRYPMSDIMRPFELTAQMCRMHWMTPMIIYWARRQSAETMKHYARAYGDWLENPLPHGGV.

The protein belongs to the NAD(P)H dehydrogenase (quinone) family. KefG subfamily. Interacts with KefB.

Its subcellular location is the cell inner membrane. The enzyme catalyses a quinone + NADH + H(+) = a quinol + NAD(+). It carries out the reaction a quinone + NADPH + H(+) = a quinol + NADP(+). Regulatory subunit of a potassium efflux system that confers protection against electrophiles. Required for full activity of KefB. This is Glutathione-regulated potassium-efflux system ancillary protein KefG from Erwinia tasmaniensis (strain DSM 17950 / CFBP 7177 / CIP 109463 / NCPPB 4357 / Et1/99).